The chain runs to 566 residues: Serine/threonine-protein kinase PknE (566 aa).

Topologically, residues 1–337 (MDGTAESREG…PLPRSARQPW (337 aa)) are cytoplasmic. A Phosphoserine; by autocatalysis modification is found at Ser7. A Phosphothreonine; by autocatalysis modification is found at Thr11. The Protein kinase domain maps to 16–275 (YRLRRLVGRG…DLSAAAHAAL (260 aa)). ATP is bound by residues 22–30 (VGRGGMGDV) and Lys45. Phosphothreonine; by autocatalysis occurs at positions 50 and 59. Asp139 (proton acceptor) is an active-site residue. 3 positions are modified to phosphothreonine; by autocatalysis: Thr170, Thr175, and Thr178. The interval 296 to 330 (PVPSTHPVSPGTRWPQPTPWAGGAPPWGPPSSPLP) is disordered. A helical membrane pass occupies residues 338–358 (LWVGVAVAVVVALAGGLGIAL). The Extracellular segment spans residues 359–566 (AHPWRSSGPR…DPSWLARLIG (208 aa)).

The protein belongs to the protein kinase superfamily. Ser/Thr protein kinase family. Autophosphorylated on serine and threonine residues. Dephosphorylated by PstP.

It is found in the cell membrane. The enzyme catalyses L-seryl-[protein] + ATP = O-phospho-L-seryl-[protein] + ADP + H(+). The catalysed reaction is L-threonyl-[protein] + ATP = O-phospho-L-threonyl-[protein] + ADP + H(+). The protein is Serine/threonine-protein kinase PknE (pknE) of Mycobacterium bovis (strain ATCC BAA-935 / AF2122/97).